A 140-amino-acid chain; its full sequence is Holo-[acyl-carrier-protein] synthase (140 aa).

Asp8 and Glu62 together coordinate Mg(2+).

The protein belongs to the P-Pant transferase superfamily. AcpS family. Mg(2+) serves as cofactor.

It is found in the cytoplasm. It catalyses the reaction apo-[ACP] + CoA = holo-[ACP] + adenosine 3',5'-bisphosphate + H(+). Functionally, transfers the 4'-phosphopantetheine moiety from coenzyme A to a Ser of acyl-carrier-protein. The polypeptide is Holo-[acyl-carrier-protein] synthase (Cupriavidus pinatubonensis (strain JMP 134 / LMG 1197) (Cupriavidus necator (strain JMP 134))).